The following is a 620-amino-acid chain: Membrane protein insertase YidC (620 aa).

Transmembrane regions (helical) follow at residues Gln-5 to Thr-25, Leu-343 to Leu-363, Val-366 to Leu-386, Leu-436 to Phe-456, Leu-482 to Ile-502, and Pro-529 to Val-549.

Belongs to the OXA1/ALB3/YidC family. Type 1 subfamily. In terms of assembly, interacts with the Sec translocase complex via SecD. Specifically interacts with transmembrane segments of nascent integral membrane proteins during membrane integration.

The protein localises to the cell inner membrane. Functionally, required for the insertion and/or proper folding and/or complex formation of integral membrane proteins into the membrane. Involved in integration of membrane proteins that insert both dependently and independently of the Sec translocase complex, as well as at least some lipoproteins. Aids folding of multispanning membrane proteins. The sequence is that of Membrane protein insertase YidC from Cytophaga hutchinsonii (strain ATCC 33406 / DSM 1761 / CIP 103989 / NBRC 15051 / NCIMB 9469 / D465).